The sequence spans 220 residues: Iron-sulfur cluster repair protein YtfE (220 aa).

Belongs to the RIC family. YtfE subfamily. In terms of assembly, homodimer.

It is found in the cytoplasm. Its function is as follows. Di-iron-containing protein involved in the repair of iron-sulfur clusters damaged by oxidative and nitrosative stress conditions. This chain is Iron-sulfur cluster repair protein YtfE, found in Enterobacter sp. (strain 638).